The following is a 233-amino-acid chain: Probable cyclic nucleotide phosphodiesterase COSY_0614 (233 aa).

Fe cation is bound by residues aspartate 10, histidine 12, aspartate 48, asparagine 78, histidine 144, histidine 183, and histidine 185. AMP is bound by residues histidine 12, aspartate 48, and asparagine 78 to histidine 79. Position 185 (histidine 185) interacts with AMP.

This sequence belongs to the cyclic nucleotide phosphodiesterase class-III family. Fe(2+) is required as a cofactor.

The polypeptide is Probable cyclic nucleotide phosphodiesterase COSY_0614 (Vesicomyosocius okutanii subsp. Calyptogena okutanii (strain HA)).